The primary structure comprises 213 residues: N-(5'-phosphoribosyl)anthranilate isomerase (213 aa).

This sequence belongs to the TrpF family.

It catalyses the reaction N-(5-phospho-beta-D-ribosyl)anthranilate = 1-(2-carboxyphenylamino)-1-deoxy-D-ribulose 5-phosphate. Its pathway is amino-acid biosynthesis; L-tryptophan biosynthesis; L-tryptophan from chorismate: step 3/5. This is N-(5'-phosphoribosyl)anthranilate isomerase from Leptospira interrogans serogroup Icterohaemorrhagiae serovar copenhageni (strain Fiocruz L1-130).